The chain runs to 312 residues: Methionyl-tRNA formyltransferase (312 aa).

Residue 111–114 (SLLP) participates in (6S)-5,6,7,8-tetrahydrofolate binding.

It belongs to the Fmt family.

It catalyses the reaction L-methionyl-tRNA(fMet) + (6R)-10-formyltetrahydrofolate = N-formyl-L-methionyl-tRNA(fMet) + (6S)-5,6,7,8-tetrahydrofolate + H(+). Functionally, attaches a formyl group to the free amino group of methionyl-tRNA(fMet). The formyl group appears to play a dual role in the initiator identity of N-formylmethionyl-tRNA by promoting its recognition by IF2 and preventing the misappropriation of this tRNA by the elongation apparatus. The sequence is that of Methionyl-tRNA formyltransferase from Myxococcus xanthus (strain DK1622).